The following is a 193-amino-acid chain: Probable type II restriction enzyme HpyAORF263P (193 aa).

It belongs to the BsaWI type II restriction endonuclease family.

It carries out the reaction Endonucleolytic cleavage of DNA to give specific double-stranded fragments with terminal 5'-phosphates.. Its function is as follows. A P subtype probable restriction enzyme that recognizes the double-stranded sequence CCGG; the cleavage site is unknown. The sequence is that of Probable type II restriction enzyme HpyAORF263P from Helicobacter pylori (strain ATCC 700392 / 26695) (Campylobacter pylori).